Here is a 1522-residue protein sequence, read N- to C-terminus: Adhesion G protein-coupled receptor B3 (1522 aa).

The signal sequence occupies residues 1–25; it reads MKAVRNLLIYIFSTYLLVMFGFNAA. At 26-880 the chain is on the extracellular side; that stretch reads QDFWCSTLVK…MESSGTPSVT (855 aa). The region spanning 30–159 is the CUB domain; the sequence is CSTLVKGVIY…KSFFEFLVLN (130 aa). Residues Asn-51, Asn-54, Asn-82, Asn-105, and Asn-241 are each glycosylated (N-linked (GlcNAc...) asparagine). 4 consecutive TSP type-1 domains span residues 291 to 343, 345 to 398, 400 to 453, and 455 to 508; these read ESGV…ALCP, HGVW…ALCP, DGQW…PECT, and NGQW…QRCP. 14 disulfides stabilise this stretch: Cys-303–Cys-336, Cys-307–Cys-342, Cys-318–Cys-326, Cys-357–Cys-392, Cys-361–Cys-397, Cys-372–Cys-382, Cys-412–Cys-447, Cys-416–Cys-452, Cys-427–Cys-437, Cys-467–Cys-502, Cys-471–Cys-507, Cys-482–Cys-492, Cys-514–Cys-549, and Cys-537–Cys-567. N-linked (GlcNAc...) asparagine glycosylation is present at Asn-337. Asn-418 is a glycosylation site (N-linked (GlcNAc...) asparagine). Asn-540 is a glycosylation site (N-linked (GlcNAc...) asparagine). A Phosphoserine modification is found at Ser-619. Residues Asn-625, Asn-779, Asn-812, and Asn-828 are each glycosylated (N-linked (GlcNAc...) asparagine). The GAIN-B domain occupies 693–869; it reads QNSYLMTGNV…AILAQQPREI (177 aa). Disulfide bonds link Cys-819–Cys-851 and Cys-839–Cys-853. A GPS region spans residues 819–869; sequence CVLWDDSKSNESLGTWSTQGCKTVLTDASHTKCLCDRLSTFAILAQQPREI. The helical transmembrane segment at 881–901 threads the bilayer; it reads LIVGSGLSCLALITLAVVYAA. Over 902-910 the chain is Cytoplasmic; the sequence is LWRYIRSER. Residues 911–931 traverse the membrane as a helical segment; sequence SIILINFCLSIISSNILILVG. Topologically, residues 932–939 are extracellular; that stretch reads QTQTHNKS. Asn-937 carries N-linked (GlcNAc...) asparagine glycosylation. The chain crosses the membrane as a helical span at residues 940 to 960; that stretch reads ICTTTTAFLHFFFLASFCWVL. At 961–981 the chain is on the cytoplasmic side; that stretch reads TEAWQSYMAVTGKIRTRLIRK. The chain crosses the membrane as a helical span at residues 982–1002; the sequence is RFLCLGWGLPALVVATSVGFT. Residues 1003-1023 lie on the Extracellular side of the membrane; it reads RTKGYGTDHYCWLSLEGGLLY. A helical membrane pass occupies residues 1024-1044; sequence AFVGPAAAVVLVNMVIGILVF. At 1045-1098 the chain is on the cytoplasmic side; the sequence is NKLVSRDGILDKKLKHRAGQMSEPHSGLTLKCAKCGVVSTTALSATTASNAMAS. The chain crosses the membrane as a helical span at residues 1099–1119; sequence LWSSCVVLPLLALTWMSAVLA. Residues 1120–1125 lie on the Extracellular side of the membrane; that stretch reads MTDKRS. A helical transmembrane segment spans residues 1126–1146; that stretch reads ILFQILFAVFDSLQGFVIVMV. Residues 1147–1522 are Cytoplasmic-facing; it reads HCILRREVQD…VQEGDFQTEV (376 aa). Phosphoserine is present on residues Ser-1220 and Ser-1411.

It belongs to the G-protein coupled receptor 2 family. Adhesion G-protein coupled receptor (ADGR) subfamily. As to quaternary structure, forms a heterodimer, consisting of a large extracellular region non-covalently linked to a seven-transmembrane moiety. Interacts (via its TSRs) with C1QL1, C1QL2, C1QL3 and C1QL4. Interacts via (C-terminus) with ELMO1, ELMO2 and ELMO3. The endogenous protein is proteolytically cleaved into 2 subunits, an extracellular subunit and a seven-transmembrane subunit. In terms of tissue distribution, brain-specific expression.

The protein resides in the cell membrane. In terms of biological role, receptor that plays a role in the regulation of synaptogenesis and dendritic spine formation at least partly via interaction with ELMO1 and RAC1 activity. Promotes myoblast fusion through ELMO/DOCK1. The protein is Adhesion G protein-coupled receptor B3 (Adgrb3) of Mus musculus (Mouse).